The primary structure comprises 351 residues: UDP-N-acetylenolpyruvoylglucosamine reductase (351 aa).

Positions 11-213 (GVGGSIACFI…KQVRDQVLRI (203 aa)) constitute an FAD-binding PCMH-type domain. Residue Arg158 is part of the active site. Ser239 (proton donor) is an active-site residue. Glu343 is an active-site residue.

The protein belongs to the MurB family. The cofactor is FAD.

The protein resides in the cytoplasm. The enzyme catalyses UDP-N-acetyl-alpha-D-muramate + NADP(+) = UDP-N-acetyl-3-O-(1-carboxyvinyl)-alpha-D-glucosamine + NADPH + H(+). It participates in cell wall biogenesis; peptidoglycan biosynthesis. Its function is as follows. Cell wall formation. The polypeptide is UDP-N-acetylenolpyruvoylglucosamine reductase (Tropheryma whipplei (strain TW08/27) (Whipple's bacillus)).